The following is a 122-amino-acid chain: Ribosome-binding factor A (122 aa).

It belongs to the RbfA family. In terms of assembly, monomer. Binds 30S ribosomal subunits, but not 50S ribosomal subunits or 70S ribosomes.

It localises to the cytoplasm. In terms of biological role, one of several proteins that assist in the late maturation steps of the functional core of the 30S ribosomal subunit. Associates with free 30S ribosomal subunits (but not with 30S subunits that are part of 70S ribosomes or polysomes). Required for efficient processing of 16S rRNA. May interact with the 5'-terminal helix region of 16S rRNA. This Dichelobacter nodosus (strain VCS1703A) protein is Ribosome-binding factor A.